The primary structure comprises 663 residues: Spore germination protein GerIA (663 aa).

Positions 1–13 (MIWNWLRKKKKSN) are enriched in basic residues. A disordered region spans residues 1–175 (MIWNWLRKKK…SGGNSIYDFT (175 aa)). Basic and acidic residues predominate over residues 47 to 56 (KNNEQKDSSQ). 3 stretches are compositionally biased toward low complexity: residues 57 to 72 (DKQQ…QDKQ), 88 to 101 (PKQG…QQSA), and 122 to 150 (DKQQ…QDKQ). A run of 5 helical transmembrane segments spans residues 414–434 (IFVD…DFFI), 451–471 (ILRL…VAVL), 491–511 (AQVP…IDLL), 541–561 (AGLT…ASFI), and 578–598 (FLAF…IFLF).

This sequence belongs to the GerABKA family.

It localises to the cell membrane. Its function is as follows. Required for inosine germination. In Bacillus cereus, this protein is Spore germination protein GerIA (gerIA).